A 358-amino-acid chain; its full sequence is tRNA (guanine-N(7)-)-methyltransferase (358 aa).

A disordered region spans residues 1-29 (MTPPPPKRQKRDEYRKATAEATSQSGASD). Residues Gly99 and 122 to 123 (EI) contribute to the S-adenosyl-L-methionine site. Low complexity predominate over residues 151–186 (TATAASETPSQQQAQIDGKQANANAAADAASPAPST). A disordered region spans residues 151-194 (TATAASETPSQQQAQIDGKQANANAAADAASPAPSTDTEHMPTT). Residues 209 to 210 (NT) and Cys229 contribute to the S-adenosyl-L-methionine site. Residue Asp232 is part of the active site. An S-adenosyl-L-methionine-binding site is contributed by 330 to 332 (TEE).

This sequence belongs to the class I-like SAM-binding methyltransferase superfamily. TrmB family. In terms of assembly, forms a complex with trm82.

It localises to the nucleus. The catalysed reaction is guanosine(46) in tRNA + S-adenosyl-L-methionine = N(7)-methylguanosine(46) in tRNA + S-adenosyl-L-homocysteine. It functions in the pathway tRNA modification; N(7)-methylguanine-tRNA biosynthesis. In terms of biological role, catalyzes the formation of N(7)-methylguanine at position 46 (m7G46) in tRNA. The polypeptide is tRNA (guanine-N(7)-)-methyltransferase (trm8) (Aspergillus fumigatus (strain ATCC MYA-4609 / CBS 101355 / FGSC A1100 / Af293) (Neosartorya fumigata)).